Reading from the N-terminus, the 345-residue chain is Phosphoribosylformylglycinamidine cyclo-ligase (345 aa).

It belongs to the AIR synthase family.

The protein localises to the cytoplasm. The enzyme catalyses 2-formamido-N(1)-(5-O-phospho-beta-D-ribosyl)acetamidine + ATP = 5-amino-1-(5-phospho-beta-D-ribosyl)imidazole + ADP + phosphate + H(+). It participates in purine metabolism; IMP biosynthesis via de novo pathway; 5-amino-1-(5-phospho-D-ribosyl)imidazole from N(2)-formyl-N(1)-(5-phospho-D-ribosyl)glycinamide: step 2/2. The protein is Phosphoribosylformylglycinamidine cyclo-ligase of Chromobacterium violaceum (strain ATCC 12472 / DSM 30191 / JCM 1249 / CCUG 213 / NBRC 12614 / NCIMB 9131 / NCTC 9757 / MK).